The primary structure comprises 397 residues: Elongation factor Tu (397 aa).

The region spanning 10–207 (KPHVNVGTIG…TLDTYIPEPE (198 aa)) is the tr-type G domain. Residues 19-26 (GHVDHGKT) form a G1 region. A GTP-binding site is contributed by 19 to 26 (GHVDHGKT). T26 contributes to the Mg(2+) binding site. The interval 60-64 (GITIN) is G2. Positions 81 to 84 (DCPG) are G3. Residues 81 to 85 (DCPGH) and 136 to 139 (NKAD) each bind GTP. Residues 136–139 (NKAD) form a G4 region. Residues 174–176 (SAL) are G5.

It belongs to the TRAFAC class translation factor GTPase superfamily. Classic translation factor GTPase family. EF-Tu/EF-1A subfamily. Monomer.

The protein resides in the cytoplasm. The enzyme catalyses GTP + H2O = GDP + phosphate + H(+). Functionally, GTP hydrolase that promotes the GTP-dependent binding of aminoacyl-tRNA to the A-site of ribosomes during protein biosynthesis. The sequence is that of Elongation factor Tu from Pseudomonas fluorescens (strain ATCC BAA-477 / NRRL B-23932 / Pf-5).